We begin with the raw amino-acid sequence, 437 residues long: Sonic hedgehog protein (437 aa).

The signal sequence occupies residues 1 to 24 (MLLLLARCFLVILASSLLVCPGLA). C25 carries N-palmitoyl cysteine lipidation. The Cardin-Weintraub signature appears at 33 to 39 (KRRHPKK). 7 residues coordinate Ca(2+): E90, E91, D96, T126, E127, D130, and D132. Positions 141, 148, and 183 each coordinate Zn(2+). G198 carries the Cholesterol glycine ester lipid modification. N279 is a glycosylation site (N-linked (GlcNAc...) asparagine).

This sequence belongs to the hedgehog family. As to quaternary structure, interacts with HHATL/GUP1 which negatively regulates HHAT-mediated palmitoylation of the SHH N-terminus. Interacts with BOC and CDON. Interacts with HHIP. Interacts with DISP1 via its cholesterol anchor. Interacts with SCUBE2. Interacts with glypican GPC3. In terms of assembly, multimer. In terms of processing, the C-terminal domain displays an autoproteolysis activity and a cholesterol transferase activity. Both activities result in the cleavage of the full-length protein and covalent attachment of a cholesterol moiety to the C-terminal of the newly generated N-terminal fragment (ShhN). Cholesterylation is required for the sonic hedgehog protein N-product targeting to lipid rafts and multimerization. ShhN is the active species in both local and long-range signaling, whereas the C-product (ShhC) is degraded in the endoplasmic reticulum. N-palmitoylation by HHAT of ShhN is required for sonic hedgehog protein N-product multimerization and full activity. It is a prerequisite for the membrane-proximal positioning and the subsequent shedding of this N-terminal peptide. Post-translationally, the lipidated N- and C-terminal peptides of ShhNp can be cleaved (shedding). The N-terminal palmitoylated peptide is cleaved at the Cardin-Weintraub (CW) motif site. The cleavage reduced the interactions with heparan sulfate. The cleavage is enhanced by SCUBE2. As to expression, expressed in a number of embryonic tissues including the notochord, ventral neural tube, floor plate, lung bud, zone of polarizing activity and posterior distal mesenchyme of limbs. In the adult, expressed in lung and neural retina.

It is found in the endoplasmic reticulum membrane. The protein localises to the golgi apparatus membrane. It localises to the cell membrane. The catalysed reaction is glycyl-L-cysteinyl-[protein] + cholesterol + H(+) = [protein]-C-terminal glycyl cholesterol ester + N-terminal L-cysteinyl-[protein]. Its function is as follows. The C-terminal part of the sonic hedgehog protein precursor displays an autoproteolysis and a cholesterol transferase activity. Both activities result in the cleavage of the full-length protein into two parts (ShhN and ShhC) followed by the covalent attachment of a cholesterol moiety to the C-terminal of the newly generated ShhN. Both activities occur in the reticulum endoplasmic. Once cleaved, ShhC is degraded in the endoplasmic reticulum. The dually lipidated sonic hedgehog protein N-product (ShhNp) is a morphogen which is essential for a variety of patterning events during development. Induces ventral cell fate in the neural tube and somites. Involved in the patterning of the anterior-posterior axis of the developing limb bud. Essential for axon guidance. Binds to the patched (PTCH1) receptor, which functions in association with smoothened (SMO), to activate the transcription of target genes. In the absence of SHH, PTCH1 represses the constitutive signaling activity of SMO. The sequence is that of Sonic hedgehog protein from Mus musculus (Mouse).